We begin with the raw amino-acid sequence, 737 residues long: Fibronectin type III domain-containing protein 7 (737 aa).

The N-terminal stretch at 1 to 25 (MAGRPEKCFSLIRFTLLCLKMVISS) is a signal peptide. Fibronectin type-III domains follow at residues 28-115 (APEI…TVLA), 116-203 (APVL…SPRA), 204-288 (PANI…TVAC), 289-373 (APGR…TAPC), 374-459 (CPND…TAPC), 460-544 (SPEI…TVPC), 545-633 (CPAG…CPLG), and 631-715 (PLGV…YSVT). A glycan (N-linked (GlcNAc...) asparagine) is linked at Asn230. Asn433 is a glycosylation site (N-linked (GlcNAc...) asparagine).

It localises to the secreted. The polypeptide is Fibronectin type III domain-containing protein 7 (Fndc7) (Mus musculus (Mouse)).